The following is a 298-amino-acid chain: MENYSGAVVNNKYVETKSCEYRLTNNEMPIKLQFPSYLEQKTVQIMGKCMKVDHAVIEYRNQVPFNAKGTVIVTIRDTRLSYEQAAQAAFTFPIACNVDLHYFSSSFFSLKDETPWEIVYKVEDSNVIDGTTFAQIKAKLKLSSAKHSTDIRFKPPTINILSKDYTEECVDFWSVEKPKPIRRMLNPGPNQGPYPISGHRPIMLQPGETWATRSSIGRSSSMRYTNNDRPSILDNTSASDADYPLRHLHKLPEASLDPGDSVSQSHSNAMSKREIEDIIETTISKCLISQRSNVNKAL.

It belongs to the begomovirus movement protein BC1 family. As to quaternary structure, binds to dimeric supercoiled plasmid DNA. Phosphorylated.

It is found in the host cell membrane. The protein resides in the host microsome membrane. The protein localises to the host endoplasmic reticulum membrane. Transports viral genome to neighboring plant cells directly through plasmosdesmata, without any budding. The movement protein allows efficient cell to cell propagation, by bypassing the host cell wall barrier. Begomovirus genome is shuttled out of nucleus by Nuclear shuttle protein (NSP) and the movement protein transports the DNA-NSP complex to cell plasmodesmata and facilitates further movement across the cell wall. This Mungbean yellow mosaic virus (strain Vigna) (MYMV) protein is Movement protein BC1.